Reading from the N-terminus, the 449-residue chain is Probable phosphoglucosamine mutase (449 aa).

Catalysis depends on S96, which acts as the Phosphoserine intermediate. Mg(2+) contacts are provided by S96, D233, D235, and D237. Residue S96 is modified to Phosphoserine.

This sequence belongs to the phosphohexose mutase family. It depends on Mg(2+) as a cofactor. In terms of processing, activated by phosphorylation.

It catalyses the reaction alpha-D-glucosamine 1-phosphate = D-glucosamine 6-phosphate. Catalyzes the conversion of glucosamine-6-phosphate to glucosamine-1-phosphate. This is Probable phosphoglucosamine mutase from Thermococcus gammatolerans (strain DSM 15229 / JCM 11827 / EJ3).